Reading from the N-terminus, the 306-residue chain is Palmitoyl-protein thioesterase ABHD10, mitochondrial (306 aa).

The transit peptide at 1-52 (MAVARLAAVAAWVPCRSWGCAAVPFGPHRGLSALLARIPQRAPRWLPACRQK) directs the protein to the mitochondrion. The AB hydrolase-1 domain maps to 78-177 (IIFIPGYLSY…KVVALLGVAT (100 aa)). Residues S152, D249, and H279 each act as charge relay system in the active site.

It belongs to the AB hydrolase superfamily.

Its subcellular location is the mitochondrion. The catalysed reaction is S-hexadecanoyl-L-cysteinyl-[protein] + H2O = L-cysteinyl-[protein] + hexadecanoate + H(+). It catalyses the reaction mycophenolic acid O-acyl-beta-D-glucuronide + H2O = mycophenolate + D-glucuronate + H(+). Inhibited by palmostatin-B. Its function is as follows. Acts as an acyl-protein thioesterase that hydrolyzes fatty acids from acylated residues in proteins. Regulates the mitochondrial S-depalmitoylation of the nucleophilic active site residue of peroxiredoxin-5/PRDX5, a key antioxidant protein, therefore modulating mitochondrial antioxidant ability. Also catalyzes the deglucuronidation of mycophenolic acid acyl-glucuronide, an active metabolite of the immunosuppressant drug mycophenolate. The protein is Palmitoyl-protein thioesterase ABHD10, mitochondrial (ABHD10) of Pongo abelii (Sumatran orangutan).